The primary structure comprises 460 residues: Exodeoxyribonuclease 7 large subunit (460 aa).

The protein belongs to the XseA family. As to quaternary structure, heterooligomer composed of large and small subunits.

The protein localises to the cytoplasm. It catalyses the reaction Exonucleolytic cleavage in either 5'- to 3'- or 3'- to 5'-direction to yield nucleoside 5'-phosphates.. In terms of biological role, bidirectionally degrades single-stranded DNA into large acid-insoluble oligonucleotides, which are then degraded further into small acid-soluble oligonucleotides. The sequence is that of Exodeoxyribonuclease 7 large subunit from Edwardsiella ictaluri (strain 93-146).